The chain runs to 525 residues: GMP synthase [glutamine-hydrolyzing] (525 aa).

Residues 9 to 207 enclose the Glutamine amidotransferase type-1 domain; it reads RILILDFGSQ…VRDICQCEAL (199 aa). The active-site Nucleophile is the cysteine 86. Active-site residues include histidine 181 and glutamate 183. The 193-residue stretch at 208–400 folds into the GMPS ATP-PPase domain; the sequence is WTPAKIIDDA…LGLPYDMLYR (193 aa). Residue 235–241 participates in ATP binding; that stretch reads SGGVDSS.

As to quaternary structure, homodimer.

It carries out the reaction XMP + L-glutamine + ATP + H2O = GMP + L-glutamate + AMP + diphosphate + 2 H(+). It functions in the pathway purine metabolism; GMP biosynthesis; GMP from XMP (L-Gln route): step 1/1. Its function is as follows. Catalyzes the synthesis of GMP from XMP. The sequence is that of GMP synthase [glutamine-hydrolyzing] from Salmonella paratyphi B (strain ATCC BAA-1250 / SPB7).